Reading from the N-terminus, the 292-residue chain is 4-hydroxy-tetrahydrodipicolinate synthase (292 aa).

Threonine 45 is a binding site for pyruvate. The Proton donor/acceptor role is filled by tyrosine 133. The active-site Schiff-base intermediate with substrate is the lysine 161. Isoleucine 203 contacts pyruvate.

The protein belongs to the DapA family. In terms of assembly, homotetramer; dimer of dimers.

The protein localises to the cytoplasm. It catalyses the reaction L-aspartate 4-semialdehyde + pyruvate = (2S,4S)-4-hydroxy-2,3,4,5-tetrahydrodipicolinate + H2O + H(+). The protein operates within amino-acid biosynthesis; L-lysine biosynthesis via DAP pathway; (S)-tetrahydrodipicolinate from L-aspartate: step 3/4. Its function is as follows. Catalyzes the condensation of (S)-aspartate-beta-semialdehyde [(S)-ASA] and pyruvate to 4-hydroxy-tetrahydrodipicolinate (HTPA). This is 4-hydroxy-tetrahydrodipicolinate synthase from Salmonella arizonae (strain ATCC BAA-731 / CDC346-86 / RSK2980).